Here is a 542-residue protein sequence, read N- to C-terminus: Chitinase 2 (542 aa).

Positions 1-22 (MLTRTFLGMAISAFLASTGVQA) are cleaved as a signal peptide. The 286-residue stretch at 29 to 314 (PNVMYYWGQN…SQLYSLVHSG (286 aa)) folds into the GH18 domain. The Proton donor role is filled by Glu166. The interval 312 to 356 (HSGGSTPPPPSSSSATKTTTKTTATSTKTTTTTAPTATSTPGSCP) is disordered. Over residues 323–354 (SSSATKTTTKTTATSTKTTTTTAPTATSTPGS) the composition is skewed to low complexity. The segment at 355-406 (CPVANQPCSTQNQYACTADGKYAVCDHGKWVASSCPSNTVCIPTTDGASIYC) is chitin-binding, high affinity. A propeptide spanning residues 447 to 542 (AQLAVTSTDK…APSTSAWNFK (96 aa)) is cleaved from the precursor.

Belongs to the glycosyl hydrolase 18 family. Chitinase class III subfamily. Monomer. Post-translationally, O-glycosylated.

The protein localises to the secreted. It catalyses the reaction Random endo-hydrolysis of N-acetyl-beta-D-glucosaminide (1-&gt;4)-beta-linkages in chitin and chitodextrins.. Probably involved in the apical growth and branching of fungal hyphae. The polypeptide is Chitinase 2 (CHI2) (Rhizopus oligosporus (Rhizopus microsporus var. oligosporus)).